The sequence spans 217 residues: Glycosylphosphatidylinositol anchor biosynthesis protein 11 (217 aa).

The next 6 membrane-spanning stretches (helical) occupy residues 45–61, 74–94, 111–131, 138–158, 169–189, and 195–215; these read TWQT…YWFI, WLLV…ATVY, VTCI…GAPF, TWLL…SVLN, YFIS…LDWD, and WPIP…TFCS.

It belongs to the PIGF family.

It localises to the endoplasmic reticulum membrane. It functions in the pathway glycolipid biosynthesis; glycosylphosphatidylinositol-anchor biosynthesis. Its function is as follows. Acts in the GPI biosynthetic pathway between GlcNAc-PI synthesis and GPI transfer to protein. The sequence is that of Glycosylphosphatidylinositol anchor biosynthesis protein 11 (GPI11) from Eremothecium gossypii (strain ATCC 10895 / CBS 109.51 / FGSC 9923 / NRRL Y-1056) (Yeast).